The sequence spans 394 residues: Elongation factor Tu (394 aa).

The tr-type G domain maps to 10–204 (KPHINVGTIG…HLDNYIPEPK (195 aa)). Positions 19-26 (GHVDHGKT) are G1. 19-26 (GHVDHGKT) lines the GTP pocket. T26 contacts Mg(2+). A G2 region spans residues 60–64 (GITIN). The tract at residues 81–84 (DCPG) is G3. GTP contacts are provided by residues 81–85 (DCPGH) and 136–139 (NKCD). Positions 136-139 (NKCD) are G4. Residues 174-176 (SAL) form a G5 region.

It belongs to the TRAFAC class translation factor GTPase superfamily. Classic translation factor GTPase family. EF-Tu/EF-1A subfamily. As to quaternary structure, monomer.

Its subcellular location is the cytoplasm. It carries out the reaction GTP + H2O = GDP + phosphate + H(+). Functionally, GTP hydrolase that promotes the GTP-dependent binding of aminoacyl-tRNA to the A-site of ribosomes during protein biosynthesis. This is Elongation factor Tu from Wigglesworthia glossinidia brevipalpis.